A 692-amino-acid chain; its full sequence is Proprotein convertase subtilisin/kexin type 9 (692 aa).

The signal sequence occupies residues 1 to 30 (MGTVSSRRSWWPLPLLLLLLLLLGPAGARA). Residues 31–152 (QEDEDGDYEE…IEEDSSVFAQ (122 aa)) constitute a propeptide that is removed on maturation. Sulfotyrosine is present on Y38. S47 carries the post-translational modification Phosphoserine. Residues 77–149 (TYVVVLKEET…VDYIEEDSSV (73 aa)) form the Inhibitor I9 domain. In terms of domain architecture, Peptidase S8 spans 155 to 461 (PWNLERITPP…GWQLFCRTVW (307 aa)). Active-site charge relay system residues include D186 and H226. Disulfide bonds link C223/C255 and C323/C358. S386 serves as the catalytic Charge relay system. The C-terminal domain stretch occupies residues 450-692 (GAGWQLFCRT…HLAQASQELQ (243 aa)). Cystine bridges form between C457/C527, C477/C526, and C486/C509. The N-linked (GlcNAc...) asparagine glycan is linked to N533. Intrachain disulfides connect C534/C601, C552/C600, C562/C588, C608/C679, C626/C678, and C635/C654. A Phosphoserine modification is found at S688.

The protein belongs to the peptidase S8 family. Monomer. Can self-associate to form dimers and higher multimers which may have increased LDLR degrading activity. The precursor protein but not the mature protein may form multimers. Interacts with APOB, VLDLR, LRP8/APOER2 and BACE1. The full-length immature form (pro-PCSK9) interacts with SCNN1A, SCNN1B and SCNN1G. The pro-PCSK9 form (via C-terminal domain) interacts with LDLR. Interacts (via the C-terminal domain) with ANXA2 (via repeat Annexin 1); the interaction inhibits the degradation of LDLR. Requires Ca(2+) as cofactor. In terms of processing, cleavage by furin and PCSK5 generates a truncated inactive protein that is unable to induce LDLR degradation. Undergoes autocatalytic cleavage in the endoplasmic reticulum to release the propeptide from the N-terminus and the cleavage of the propeptide is strictly required for its maturation and activation. The cleaved propeptide however remains associated with the catalytic domain through non-covalent interactions, preventing potential substrates from accessing its active site. As a result, it is secreted from cells as a propeptide-containing, enzymatically inactive protein. Post-translationally, phosphorylation protects the propeptide against proteolysis.

It is found in the cytoplasm. The protein resides in the secreted. Its subcellular location is the endosome. It localises to the lysosome. The protein localises to the cell surface. It is found in the endoplasmic reticulum. The protein resides in the golgi apparatus. Its activity is regulated as follows. Its proteolytic activity is autoinhibited by the non-covalent binding of the propeptide to the catalytic domain. Inhibited by EGTA. Its function is as follows. Crucial player in the regulation of plasma cholesterol homeostasis. Binds to low-density lipid receptor family members: low density lipoprotein receptor (LDLR), very low density lipoprotein receptor (VLDLR), apolipoprotein E receptor (LRP1/APOER) and apolipoprotein receptor 2 (LRP8/APOER2), and promotes their degradation in intracellular acidic compartments. Acts via a non-proteolytic mechanism to enhance the degradation of the hepatic LDLR through a clathrin LDLRAP1/ARH-mediated pathway. May prevent the recycling of LDLR from endosomes to the cell surface or direct it to lysosomes for degradation. Can induce ubiquitination of LDLR leading to its subsequent degradation. Inhibits intracellular degradation of APOB via the autophagosome/lysosome pathway in a LDLR-independent manner. Involved in the disposal of non-acetylated intermediates of BACE1 in the early secretory pathway. Inhibits epithelial Na(+) channel (ENaC)-mediated Na(+) absorption by reducing ENaC surface expression primarily by increasing its proteasomal degradation. Regulates neuronal apoptosis via modulation of LRP8/APOER2 levels and related anti-apoptotic signaling pathways. This is Proprotein convertase subtilisin/kexin type 9 (PCSK9) from Pan troglodytes (Chimpanzee).